Consider the following 246-residue polypeptide: Ribonuclease PH (246 aa).

The disordered stretch occupies residues 1–33 (MTPPKLPVREGRDALTPRPVSVQRGVNPHAPGS). Phosphate contacts are provided by residues R90 and 128-130 (GTR).

This sequence belongs to the RNase PH family. Homohexameric ring arranged as a trimer of dimers.

The enzyme catalyses tRNA(n+1) + phosphate = tRNA(n) + a ribonucleoside 5'-diphosphate. Phosphorolytic 3'-5' exoribonuclease that plays an important role in tRNA 3'-end maturation. Removes nucleotide residues following the 3'-CCA terminus of tRNAs; can also add nucleotides to the ends of RNA molecules by using nucleoside diphosphates as substrates, but this may not be physiologically important. Probably plays a role in initiation of 16S rRNA degradation (leading to ribosome degradation) during starvation. The polypeptide is Ribonuclease PH (Deinococcus radiodurans (strain ATCC 13939 / DSM 20539 / JCM 16871 / CCUG 27074 / LMG 4051 / NBRC 15346 / NCIMB 9279 / VKM B-1422 / R1)).